An 841-amino-acid polypeptide reads, in one-letter code: DNA ligase (841 aa).

Residues 54–58 (DAEYD), 103–104 (SL), and Glu-143 contribute to the NAD(+) site. Lys-145 acts as the N6-AMP-lysine intermediate in catalysis. 4 residues coordinate NAD(+): Arg-166, Glu-203, Lys-321, and Lys-345. 4 residues coordinate Zn(2+): Cys-471, Cys-474, Cys-489, and Cys-495. The disordered stretch occupies residues 554 to 575 (KTVAESDQMPSEGSSVGASGKH). The segment covering 561-570 (QMPSEGSSVG) has biased composition (polar residues). In terms of domain architecture, BRCT spans 764 to 841 (GINKAVAGKT…SEAELLTLLG (78 aa)).

It belongs to the NAD-dependent DNA ligase family. LigA subfamily. Mg(2+) is required as a cofactor. The cofactor is Mn(2+).

The enzyme catalyses NAD(+) + (deoxyribonucleotide)n-3'-hydroxyl + 5'-phospho-(deoxyribonucleotide)m = (deoxyribonucleotide)n+m + AMP + beta-nicotinamide D-nucleotide.. Functionally, DNA ligase that catalyzes the formation of phosphodiester linkages between 5'-phosphoryl and 3'-hydroxyl groups in double-stranded DNA using NAD as a coenzyme and as the energy source for the reaction. It is essential for DNA replication and repair of damaged DNA. In Neisseria meningitidis serogroup C (strain 053442), this protein is DNA ligase.